The sequence spans 475 residues: Endoglucanase A (475 aa).

The signal sequence occupies residues 1-26 (MKKTTAFLLCFLMIFTALLPMQNANA). The active site involves H147. The Proton donor role is filled by E195. The Nucleophile role is filled by E332. The 66-residue stretch at 409-474 (PVIVYGDYNN…LLGMVSKLPS (66 aa)) folds into the Dockerin domain.

This sequence belongs to the glycosyl hydrolase 5 (cellulase A) family.

The catalysed reaction is Endohydrolysis of (1-&gt;4)-beta-D-glucosidic linkages in cellulose, lichenin and cereal beta-D-glucans.. The biological conversion of cellulose to glucose generally requires three types of hydrolytic enzymes: (1) Endoglucanases which cut internal beta-1,4-glucosidic bonds; (2) Exocellobiohydrolases that cut the disaccharide cellobiose from the non-reducing end of the cellulose polymer chain; (3) Beta-1,4-glucosidases which hydrolyze the cellobiose and other short cello-oligosaccharides to glucose. The polypeptide is Endoglucanase A (celCCA) (Ruminiclostridium cellulolyticum (strain ATCC 35319 / DSM 5812 / JCM 6584 / H10) (Clostridium cellulolyticum)).